The primary structure comprises 243 residues: Vesicle-associated membrane protein-associated protein B (243 aa).

At A2 the chain carries N-acetylalanine. Residues 2-218 (AKVEQVLSLE…AALAATGKEE (217 aa)) lie on the Cytoplasmic side of the membrane. Positions 7–124 (VLSLEPQHEL…MDSKLRCVFE (118 aa)) constitute an MSP domain. S146 bears the Phosphoserine mark. K147 participates in a covalent cross-link: Glycyl lysine isopeptide (Lys-Gly) (interchain with G-Cter in SUMO1). Phosphoserine occurs at positions 156 and 159. Residues 161-196 (LDDTEVKKVMEECRRLQGEVQRLREESRQLKEEDGL) are a coiled coil. S206 is subject to Phosphoserine. A helical; Anchor for type IV membrane protein transmembrane segment spans residues 219-239 (GLSARLLALVVLFFIVGVIIG).

The protein belongs to the VAMP-associated protein (VAP) (TC 9.B.17) family. Homodimer, and heterodimer with VAPA. Interacts with VAMP1 and VAMP2. Interacts (via MSP domain) with ZFYVE27. Interacts with RMDN3. Interacts with KIF5A in a ZFYVE27-dependent manner. Interacts (via MSP domain) with STARD3 (via phospho-FFAT motif). Interacts with STARD3NL (via FFAT motif). Interacts with CERT1. Interacts with PLEKHA3 and SACM1L to form a ternary complex. Interacts with VPS13A (via FFAT motif). Interacts with RB1CC1 (via phosphorylated FFAT motif), MIGA2 (via phosphorylated FFAT motif), RMDN3 (via phosphorylated FFAT motif), OSBPL1A (via FFAT motif), KCNB1 (via phosphorylated FFAT motif) and KCNB2 (via phosphorylated FFAT motif). Interacts (via MSP domain) with WDR44 (via FFAT motif); the interactions connect the endoplasmic reticulum (ER) with the endosomal tubule.

The protein localises to the endoplasmic reticulum membrane. Its function is as follows. Endoplasmic reticulum (ER)-anchored protein that mediates the formation of contact sites between the ER and endosomes via interaction with FFAT motif-containing proteins such as STARD3 or WDR44. Interacts with STARD3 in a FFAT motif phosphorylation dependent manner. Via interaction with WDR44 participates in neosynthesized protein export. Participates in the endoplasmic reticulum unfolded protein response (UPR) by inducing ERN1/IRE1 activity. Involved in cellular calcium homeostasis regulation. This chain is Vesicle-associated membrane protein-associated protein B, found in Mus musculus (Mouse).